Reading from the N-terminus, the 495-residue chain is Glycerol kinase (495 aa).

Thr11 is a binding site for ADP. ATP contacts are provided by Thr11, Thr12, and Ser13. Residue Thr11 coordinates sn-glycerol 3-phosphate. Arg15 serves as a coordination point for ADP. Residues Arg81, Glu82, Tyr133, and Asp242 each contribute to the sn-glycerol 3-phosphate site. Arg81, Glu82, Tyr133, Asp242, and Gln243 together coordinate glycerol. ADP-binding residues include Thr264 and Gly307. Residues Thr264, Gly307, Gln311, and Gly408 each contribute to the ATP site. Gly408 contributes to the ADP binding site.

It belongs to the FGGY kinase family.

It carries out the reaction glycerol + ATP = sn-glycerol 3-phosphate + ADP + H(+). Its pathway is polyol metabolism; glycerol degradation via glycerol kinase pathway; sn-glycerol 3-phosphate from glycerol: step 1/1. Its activity is regulated as follows. Inhibited by fructose 1,6-bisphosphate (FBP). Key enzyme in the regulation of glycerol uptake and metabolism. Catalyzes the phosphorylation of glycerol to yield sn-glycerol 3-phosphate. The sequence is that of Glycerol kinase from Geobacter sp. (strain M21).